The chain runs to 374 residues: MLPFLSMLVLLVQPLGNLGAEMKSLSQRSVPNTCTLVMCSPTENGLPGRDGRDGREGPRGEKGDPGLPGPMGLSGLQGPTGPVGPKGENGSAGEPGPKGERGLSGPPGLPGIPGPAGKEGPSGKQGNIGPQGKPGPKGEAGPKGEVGAPGMQGSTGAKGSTGPKGERGAPGVQGAPGNAGAAGPAGPAGPQGAPGSRGPPGLKGDRGVPGDRGIKGESGLPDSAALRQQMEALKGKLQRLEVAFSHYQKAALFPDGRSVGDKIFRTADSEKPFEDAQEMCKQAGGQLASPRSATENAAIQQLITAHNKAAFLSMTDVGTEGKFTYPTGEPLVYSNWAPGEPNNNGGAENCVEIFTNGQWNDKACGEQRLVICEF.

The signal sequence occupies residues 1–19; it reads MLPFLSMLVLLVQPLGNLG. S-nitrosocysteine occurs at positions 34 and 39. The disordered stretch occupies residues 38 to 222; it reads MCSPTENGLP…GIKGESGLPD (185 aa). The region spanning 45 to 221 is the Collagen-like domain; that stretch reads GLPGRDGRDG…RGIKGESGLP (177 aa). Basic and acidic residues predominate over residues 49 to 64; it reads RDGRDGREGPRGEKGD. The span at 70-79 shows a compositional bias: low complexity; sequence PMGLSGLQGP. A glycan (N-linked (GlcNAc...) asparagine) is linked at Asn-89. Low complexity-rich tracts occupy residues 137–149 and 169–200; these read KGEA…VGAP and APGV…RGPP. Residues 203-215 are compositionally biased toward basic and acidic residues; the sequence is KGDRGVPGDRGIK. The stretch at 222-253 forms a coiled coil; that stretch reads DSAALRQQMEALKGKLQRLEVAFSHYQKAALF. Residues 259-374 form the C-type lectin domain; that stretch reads VGDKIFRTAD…GEQRLVICEF (116 aa). Cystine bridges form between Cys-280–Cys-372 and Cys-350–Cys-364.

Belongs to the SFTPD family. In terms of assembly, oligomeric complex of 4 set of homotrimers. S-nitrosylation at Cys-34 and Cys-39 alters the quaternary structure which results in a pro-inflammatory chemoattractive signaling activity with macrophages.

The protein resides in the secreted. It is found in the extracellular space. Its subcellular location is the extracellular matrix. The protein localises to the surface film. Contributes to the lung's defense against inhaled microorganisms, organic antigens and toxins. Interacts with compounds such as bacterial lipopolysaccharides, oligosaccharides and fatty acids and modulates leukocyte action in immune response. May participate in the extracellular reorganization or turnover of pulmonary surfactant. Binds strongly maltose residues and to a lesser extent other alpha-glucosyl moieties. The polypeptide is Pulmonary surfactant-associated protein D (Sftpd) (Mus musculus (Mouse)).